We begin with the raw amino-acid sequence, 351 residues long: Selenide, water dikinase (351 aa).

Cys20 is a catalytic residue. ATP-binding positions include Lys23 and 51-53 (TKD). Mg(2+) is bound at residue Asp54. Residues Asp71, Asp94, and 142–144 (GHS) each bind ATP. Asp94 serves as a coordination point for Mg(2+). Residue Asp230 participates in Mg(2+) binding.

Belongs to the selenophosphate synthase 1 family. Class I subfamily. As to quaternary structure, homodimer. It depends on Mg(2+) as a cofactor.

It carries out the reaction hydrogenselenide + ATP + H2O = selenophosphate + AMP + phosphate + 2 H(+). In terms of biological role, synthesizes selenophosphate from selenide and ATP. The protein is Selenide, water dikinase of Pasteurella multocida (strain Pm70).